The primary structure comprises 226 residues: UPF0758 protein SAK_1186 (226 aa).

In terms of domain architecture, MPN spans 103–225; it reads QILSSEQLAR…YYSFREEADI (123 aa). His174, His176, and Asp187 together coordinate Zn(2+). The JAMM motif signature appears at 174 to 187; sequence HNHPSGSPKPSESD.

The protein belongs to the UPF0758 family.

The sequence is that of UPF0758 protein SAK_1186 from Streptococcus agalactiae serotype Ia (strain ATCC 27591 / A909 / CDC SS700).